Reading from the N-terminus, the 483-residue chain is ATP-dependent protease ATPase subunit HslU (483 aa).

ATP is bound by residues valine 18 and glycine 60–glutamate 65. Composition is skewed to low complexity over residues leucine 136–glutamine 147 and alanine 171–proline 181. Positions leucine 136–valine 212 are disordered. Residues threonine 182–arginine 191 are compositionally biased toward polar residues. Residues serine 192 to aspartate 209 are compositionally biased toward basic and acidic residues. ATP contacts are provided by aspartate 296, glutamate 361, and arginine 433.

It belongs to the ClpX chaperone family. HslU subfamily. In terms of assembly, a double ring-shaped homohexamer of HslV is capped on each side by a ring-shaped HslU homohexamer. The assembly of the HslU/HslV complex is dependent on binding of ATP.

Its subcellular location is the cytoplasm. Its function is as follows. ATPase subunit of a proteasome-like degradation complex; this subunit has chaperone activity. The binding of ATP and its subsequent hydrolysis by HslU are essential for unfolding of protein substrates subsequently hydrolyzed by HslV. HslU recognizes the N-terminal part of its protein substrates and unfolds these before they are guided to HslV for hydrolysis. This Nitratidesulfovibrio vulgaris (strain DSM 19637 / Miyazaki F) (Desulfovibrio vulgaris) protein is ATP-dependent protease ATPase subunit HslU.